Here is a 263-residue protein sequence, read N- to C-terminus: 3-methyl-2-oxobutanoate hydroxymethyltransferase (263 aa).

Asp46 and Asp85 together coordinate Mg(2+). 3-methyl-2-oxobutanoate is bound by residues 46–47 (DS), Asp85, and Lys115. Glu117 is a Mg(2+) binding site. Glu180 (proton acceptor) is an active-site residue.

The protein belongs to the PanB family. As to quaternary structure, homodecamer; pentamer of dimers. Requires Mg(2+) as cofactor.

It is found in the cytoplasm. The enzyme catalyses 3-methyl-2-oxobutanoate + (6R)-5,10-methylene-5,6,7,8-tetrahydrofolate + H2O = 2-dehydropantoate + (6S)-5,6,7,8-tetrahydrofolate. The protein operates within cofactor biosynthesis; (R)-pantothenate biosynthesis; (R)-pantoate from 3-methyl-2-oxobutanoate: step 1/2. In terms of biological role, catalyzes the reversible reaction in which hydroxymethyl group from 5,10-methylenetetrahydrofolate is transferred onto alpha-ketoisovalerate to form ketopantoate. The chain is 3-methyl-2-oxobutanoate hydroxymethyltransferase from Corynebacterium diphtheriae (strain ATCC 700971 / NCTC 13129 / Biotype gravis).